A 149-amino-acid chain; its full sequence is Large ribosomal subunit protein bL9 (149 aa).

It belongs to the bacterial ribosomal protein bL9 family.

Functionally, binds to the 23S rRNA. This Cutibacterium acnes (strain DSM 16379 / KPA171202) (Propionibacterium acnes) protein is Large ribosomal subunit protein bL9.